Here is a 389-residue protein sequence, read N- to C-terminus: Type 2 DNA topoisomerase 6 subunit A (389 aa).

The Topo IIA-type catalytic domain occupies 12–162; that stretch reads EARRKAANIL…MLILSKEKGK (151 aa). Y106 functions as the O-(5'-phospho-DNA)-tyrosine intermediate in the catalytic mechanism. The Mg(2+) site is built by E209 and D261.

This sequence belongs to the TOP6A family. As to quaternary structure, homodimer. Heterotetramer of two Top6A and two Top6B chains. Requires Mg(2+) as cofactor.

It carries out the reaction ATP-dependent breakage, passage and rejoining of double-stranded DNA.. Its activity is regulated as follows. Not inhibited by the DNA gyrase inhibitor novobiocin, instead inhibited by eukaryotic topoisomerase inhibitors such as m- and o-amsacrine, ellipticine, and the quinolone CP-115,953. Functionally, relaxes both positive and negative supercoils and exhibits a strong decatenase and unknotting activity; it cannot introduce DNA supercoils. ATP is absolutely required for DNA cleavage; the nonhydrolyzable analog AMP-PNP generates nicked or linear products from a supercoiled dsDNA substrate. Generates staggered two-nucleotide long 5' overhangs. The enzyme is covalently attached transiently to the 5'-ends of the cleaved strands. The protein is Type 2 DNA topoisomerase 6 subunit A of Saccharolobus shibatae (strain ATCC 51178 / DSM 5389 / JCM 8931 / NBRC 15437 / B12) (Sulfolobus shibatae).